The sequence spans 153 residues: 6,7-dimethyl-8-ribityllumazine synthase (153 aa).

5-amino-6-(D-ribitylamino)uracil is bound by residues F22, 56–58 (AFE), and 80–82 (AVI). Residue 85–86 (GT) participates in (2S)-2-hydroxy-3-oxobutyl phosphate binding. H88 (proton donor) is an active-site residue. F113 is a 5-amino-6-(D-ribitylamino)uracil binding site. R127 lines the (2S)-2-hydroxy-3-oxobutyl phosphate pocket.

The protein belongs to the DMRL synthase family. Forms an icosahedral capsid composed of 60 subunits, arranged as a dodecamer of pentamers.

The enzyme catalyses (2S)-2-hydroxy-3-oxobutyl phosphate + 5-amino-6-(D-ribitylamino)uracil = 6,7-dimethyl-8-(1-D-ribityl)lumazine + phosphate + 2 H2O + H(+). The protein operates within cofactor biosynthesis; riboflavin biosynthesis; riboflavin from 2-hydroxy-3-oxobutyl phosphate and 5-amino-6-(D-ribitylamino)uracil: step 1/2. Its function is as follows. Catalyzes the formation of 6,7-dimethyl-8-ribityllumazine by condensation of 5-amino-6-(D-ribitylamino)uracil with 3,4-dihydroxy-2-butanone 4-phosphate. This is the penultimate step in the biosynthesis of riboflavin. The polypeptide is 6,7-dimethyl-8-ribityllumazine synthase (Hydrogenovibrio crunogenus (strain DSM 25203 / XCL-2) (Thiomicrospira crunogena)).